Reading from the N-terminus, the 496-residue chain is Acetyltransferase adrJ (496 aa).

Catalysis depends on proton acceptor residues His174 and Asp421.

Belongs to the plant acyltransferase family. In terms of assembly, monomer.

It participates in secondary metabolite biosynthesis; terpenoid biosynthesis. In terms of biological role, acetyltransferase; part of the gene cluster that mediates the biosynthesis of andrastins, meroterpenoid compounds that exhibit inhibitory activity against ras farnesyltransferase, suggesting that they could be promising leads for antitumor agents. The first step of the pathway is the synthesis of 3,5-dimethylorsellinic acid (DMOA) by the polyketide synthase adrD via condensation of one acetyl-CoA starter unit with 3 malonyl-CoA units and 2 methylations. DMAO is then converted to farnesyl-DMAO by the prenyltransferase adrG. The methyltransferase adrK catalyzes the methylation of the carboxyl group of farnesyl-DMAO to farnesyl-DMAO methyl ester which is further converted to epoxyfarnesyl-DMAO methyl ester by the FAD-dependent monooxygenase adrH. The terpene cyclase adrI then catalyzes the carbon skeletal rearrangement to generate the andrastin E, the first compound in the pathway having the andrastin scaffold, with the tetracyclic ring system. The post-cyclization tailoring enzymes adrF, adrE, adrJ, and adrA, are involved in the conversion of andrastin E into andrastin A. The short chain dehydrogenase adrF is responsible for the oxidation of the C-3 a hydroxyl group of andrastin E to yield the corresponding ketone, andrastin D. The ketoreductase adrE stereoselectively reduces the carbonyl moiety to reverse the stereochemistry of the C-3 position to yield andrastin F. The acetyltransferase adrJ is the acetyltransferase that attaches the acetyl group to the C-3 hydroxyl group of andrastin F to yield andrastin C. Finally, the cytochrome P450 monooxygenase adrA catalyzes two sequential oxidation reactions of the C-23 methyl group, to generate the corresponding alcohol andrastin B, and aldehyde andrastin A. This chain is Acetyltransferase adrJ, found in Penicillium roqueforti.